Consider the following 336-residue polypeptide: Fructose-1,6-bisphosphatase class 1 (336 aa).

Mg(2+) contacts are provided by E90, D112, L114, and D115. Substrate is bound by residues 115–118 (DGSS), N211, and K277. Residue E283 participates in Mg(2+) binding.

Belongs to the FBPase class 1 family. As to quaternary structure, homotetramer. It depends on Mg(2+) as a cofactor.

It localises to the cytoplasm. It carries out the reaction beta-D-fructose 1,6-bisphosphate + H2O = beta-D-fructose 6-phosphate + phosphate. It participates in carbohydrate biosynthesis; gluconeogenesis. The polypeptide is Fructose-1,6-bisphosphatase class 1 (Pseudomonas syringae pv. syringae (strain B728a)).